Consider the following 62-residue polypeptide: MKVIALFFLFAFIFCTLEVAIVEAGFGCPLNQGACHRHCLSIRRRGGYCSGFFKQTCTCYRN.

The N-terminal stretch at 1–24 (MKVIALFFLFAFIFCTLEVAIVEA) is a signal peptide. Cystine bridges form between Cys28–Cys49, Cys35–Cys57, and Cys39–Cys59.

This sequence belongs to the invertebrate defensin family. Type 2 subfamily. As to expression, highly expressed in non-venom gland (hemolymph) and moderately expressed in venom gland.

It localises to the secreted. In terms of biological role, antibacterial peptide active against Gram-positive bacteria (including S.aureus ATCC25923 (MIC=2.5 uM), M.luteus AB93113 (MIC=2.5 uM), and the antibiotic-resistant S.epidermidis PRSE P1389 (MIC=1.25 uM)), but not against Gram-negative bacteria (including E.coli and P.aeruginosa). Also has weak blocking activity on Kv1.1/KCNA1 (8.7% inhibition), Kv1.2/KCNA2 (10.2% inhibition), Kv1.3/KCNA3 (9.0% inhibition), KCa3.1/KCNN4/IK (9.1% inhibition), KCa2.3/KCNN3/SK3 (46.3% inhibition) and Kv11.1/KCNH2/ERG1 (16.9% inhibition) channels (tested at 1 uM). It inhibits potassium channel current by interacting with the pore region. The polypeptide is Defensin BmKDfsin5 (Olivierus martensii (Manchurian scorpion)).